The sequence spans 51 residues: uncharacterized protein (51 aa).

This protein is non-essential for virus function. This is an uncharacterized protein from Sulfolobus spindle-shape virus 1 (SSV1).